A 339-amino-acid polypeptide reads, in one-letter code: Methylglutaconyl-CoA hydratase, mitochondrial (339 aa).

Residues 1–67 (MAAAVAAAPG…AGGPAPKRGY (67 aa)) constitute a mitochondrion transit peptide. Lysine 100 is subject to N6-acetyllysine; alternate. Lysine 100 carries the post-translational modification N6-succinyllysine; alternate. The tract at residues 105–119 (KNLIKMLSKAVDALK) is RNA-binding. Lysine 109 is modified (N6-succinyllysine). N6-acetyllysine; alternate is present on residues lysine 113 and lysine 144. Lysine 113 and lysine 144 each carry N6-succinyllysine; alternate. N6-succinyllysine occurs at positions 148 and 160. An N6-acetyllysine; alternate mark is found at lysine 204 and lysine 211. N6-succinyllysine; alternate is present on residues lysine 204 and lysine 211. Lysine 329 carries the post-translational modification N6-succinyllysine.

Belongs to the enoyl-CoA hydratase/isomerase family. Homohexamer.

It localises to the mitochondrion. The catalysed reaction is (3S)-3-hydroxy-3-methylglutaryl-CoA = 3-methyl-(2E)-glutaconyl-CoA + H2O. It catalyses the reaction (3S)-citramalyl-CoA = itaconyl-CoA + H2O. The enzyme catalyses 3-hydroxyisovaleryl-CoA = 3-methylbut-2-enoyl-CoA + H2O. It carries out the reaction (S)-3-hydroxyglutaryl-CoA = (2E)-glutaconyl-CoA + H2O. It participates in amino-acid degradation; L-leucine degradation; (S)-3-hydroxy-3-methylglutaryl-CoA from 3-isovaleryl-CoA: step 3/3. Catalyzes the fifth step in the leucine degradation pathway, the reversible hydration of 3-methylglutaconyl-CoA (3-MG-CoA) to 3-hydroxy-3-methylglutaryl-CoA (HMG-CoA). Can catalyze the reverse reaction but at a much lower rate in vitro. HMG-CoA is then quickly degraded by another enzyme (such as HMG-CoA lyase) to give acetyl-CoA and acetoacetate. Uses other substrates such as (2E)-glutaconyl-CoA efficiently in vitro, and to a lesser extent 3-methylcrotonyl-CoA (3-methyl-(2E)-butenoyl-CoA), crotonyl-CoA ((2E)-butenoyl-CoA) and 3-hydroxybutanoyl-CoA (the missing carboxylate reduces affinity to the active site). Originally it was identified as an RNA-binding protein as it binds to AU-rich elements (AREs) in vitro. AREs direct rapid RNA degradation and mRNA deadenylation. Might have itaconyl-CoA hydratase activity, converting itaconyl-CoA into citramalyl-CoA in the C5-dicarboxylate catabolism pathway. The C5-dicarboxylate catabolism pathway is required to detoxify itaconate, an antimicrobial metabolite and immunomodulator produced by macrophages during certain infections, that can act as a vitamin B12-poisoning metabolite. The chain is Methylglutaconyl-CoA hydratase, mitochondrial (AUH) from Homo sapiens (Human).